Consider the following 919-residue polypeptide: MASLSRVLRVAATCPRGRAAWNLGLQPLATEARPTTEKSVPYQRTLKEEAQGASVVPQGPSQPLPSTANVVVIGGGSLGCQTLYHLAKLGVGGAVLLERERLTSGTTWHTAGLLWQLRPSDVEVELLAHTRQVVSRDLEEETGLHTGWIQNGGLFIASNQQRLNEYKRLMSLGKAYGIESHVLSPAETKSLYPLMNVDDLYGTLYVPQDGTMDPAGTCTTLTRAAVARGAQVIENCAVTGIRVRTDDFGVRRVAAVETEHGSIQTPCVVNCAGVWASKVGRMAGVKVPLVAMHHAYVVTERIEGIQNMPNVRDHDASVYLRLQGDALSVGGYEANPIFWEEVSDKFAFGLFDLDWDVFTQHIEGAINRVPVLEKTGIKSTVCGPESFTPDHKPLMGEAPELRGFFLGCGFNSAGMMLGGGCGQELAHWIVHGRPEKDMYSYDIRRFHHSLTDHTRWIRERSHESYAKNYSVVFPHDEPLAGRNMRRDPLHEELLGQGCVFQERQGWERPGWFNPQETAQVLDYDYYGAYGNQAHKDYTYSRLLGDEYTFDFPPHHHMIQKECLACRGAAAVFNMSYFGKFYLLGVDARKAADWLFSADVNRPPGSTVYTCMLNQRGGTESDLTVSRLAPGTQASPLVPAFEGDCYYLAVGGAVAQHNWSHINTVLQDQEFRCQLMDSSEDLGMLSIQGPASRDILQDVLDADLSNEAFPFSTHQLVRAAGHLVRAIRLSFVGELGWELHVPRASCLPVYRAVMAAGARHGLVNAGYRAIDSLSIEKGYRHWHADLRPDDSPLEAGLAFTCKLKTSVPFLGREALEKQRATGLRRRLICLTVEEEVPMFGLEAIWRNGQVVGHVRRADFGFTVNKTIAYGYIRDPSGGPVSLDFVKNGEYALERMGVTYAAQVHLKSPFDPDNKRVKGIY.

The transit peptide at 1–22 (MASLSRVLRVAATCPRGRAAWN) directs the protein to the mitochondrion. Lysine 38 carries the N6-succinyllysine modification. The residue at position 109 (histidine 109) is a Tele-8alpha-FAD histidine. An N6-acetyllysine; alternate modification is found at lysine 174. Residue lysine 174 is modified to N6-succinyllysine; alternate. Residues lysine 278, lysine 378, lysine 392, and lysine 535 each carry the N6-succinyllysine modification. N6-acetyllysine is present on residues lysine 560 and lysine 776. Tyrosine 778 carries the phosphotyrosine modification. 3 positions are modified to N6-acetyllysine; alternate: lysine 803, lysine 885, and lysine 905. An N6-succinyllysine; alternate mark is found at lysine 803, lysine 885, and lysine 905.

Belongs to the GcvT family. FAD is required as a cofactor.

It is found in the mitochondrion matrix. It carries out the reaction (6S)-5,6,7,8-tetrahydrofolyl-(gamma-L-Glu)(n) + sarcosine + oxidized [electron-transfer flavoprotein] + H(+) = (6R)-5,10-methylenetetrahydrofolyl-(gamma-L-Glu)(n) + reduced [electron-transfer flavoprotein] + glycine. It functions in the pathway amine and polyamine degradation; sarcosine degradation; formaldehyde and glycine from sarcosine: step 1/1. Catalyzes the last step of the oxidative degradation of choline to glycine. Converts sarcosine into glycine. In Mus musculus (Mouse), this protein is Sarcosine dehydrogenase, mitochondrial.